Consider the following 473-residue polypeptide: Photosystem II CP43 reaction center protein (473 aa).

Positions 1–14 (MKTLYSLRRFYPVE) are excised as a propeptide. An N-acetylthreonine modification is found at threonine 15. Residue threonine 15 is modified to Phosphothreonine. Helical transmembrane passes span 69 to 93 (LFEV…PHLA), 134 to 155 (LLGP…KDRN), 178 to 200 (KALY…RKIT), 255 to 275 (KPFA…LSYS), and 291 to 312 (WFNN…ASQA). Residue glutamate 367 coordinates [CaMn4O5] cluster. The chain crosses the membrane as a helical span at residues 447–471 (RARAAAAGFEKGIDRDFEPVLSMTP).

Belongs to the PsbB/PsbC family. PsbC subfamily. In terms of assembly, PSII is composed of 1 copy each of membrane proteins PsbA, PsbB, PsbC, PsbD, PsbE, PsbF, PsbH, PsbI, PsbJ, PsbK, PsbL, PsbM, PsbT, PsbX, PsbY, PsbZ, Psb30/Ycf12, at least 3 peripheral proteins of the oxygen-evolving complex and a large number of cofactors. It forms dimeric complexes. It depends on Binds multiple chlorophylls and provides some of the ligands for the Ca-4Mn-5O cluster of the oxygen-evolving complex. It may also provide a ligand for a Cl- that is required for oxygen evolution. PSII binds additional chlorophylls, carotenoids and specific lipids. as a cofactor.

Its subcellular location is the plastid. The protein localises to the chloroplast thylakoid membrane. Its function is as follows. One of the components of the core complex of photosystem II (PSII). It binds chlorophyll and helps catalyze the primary light-induced photochemical processes of PSII. PSII is a light-driven water:plastoquinone oxidoreductase, using light energy to abstract electrons from H(2)O, generating O(2) and a proton gradient subsequently used for ATP formation. This Amborella trichopoda protein is Photosystem II CP43 reaction center protein.